A 225-amino-acid chain; its full sequence is NAD(P)H-quinone oxidoreductase subunit K, chloroplastic (225 aa).

Positions 43, 44, 108, and 139 each coordinate [4Fe-4S] cluster.

The protein belongs to the complex I 20 kDa subunit family. NDH is composed of at least 16 different subunits, 5 of which are encoded in the nucleus. [4Fe-4S] cluster serves as cofactor.

It is found in the plastid. The protein resides in the chloroplast thylakoid membrane. It catalyses the reaction a plastoquinone + NADH + (n+1) H(+)(in) = a plastoquinol + NAD(+) + n H(+)(out). The enzyme catalyses a plastoquinone + NADPH + (n+1) H(+)(in) = a plastoquinol + NADP(+) + n H(+)(out). NDH shuttles electrons from NAD(P)H:plastoquinone, via FMN and iron-sulfur (Fe-S) centers, to quinones in the photosynthetic chain and possibly in a chloroplast respiratory chain. The immediate electron acceptor for the enzyme in this species is believed to be plastoquinone. Couples the redox reaction to proton translocation, and thus conserves the redox energy in a proton gradient. The chain is NAD(P)H-quinone oxidoreductase subunit K, chloroplastic from Oenothera argillicola (Appalachian evening primrose).